A 503-amino-acid chain; its full sequence is Maturase K (503 aa).

Belongs to the intron maturase 2 family. MatK subfamily.

Its subcellular location is the plastid. The protein resides in the chloroplast. Functionally, usually encoded in the trnK tRNA gene intron. Probably assists in splicing its own and other chloroplast group II introns. This is Maturase K from Rosa rugosa (Rugosa rose).